We begin with the raw amino-acid sequence, 897 residues long: Macoilin (897 aa).

4 consecutive transmembrane segments (helical) span residues 113–133 (ICYL…YVWI), 157–177 (QSWP…FLRI), 181–201 (PILI…PVWP), and 204–224 (LNAF…TVSM). 2 stretches are compositionally biased toward polar residues: residues 291 to 304 (IQAA…SSKK) and 329 to 338 (GNSGFNSTPP). The disordered stretch occupies residues 291–375 (IQAASATPPT…DTSSSTIEDQ (85 aa)). The span at 351 to 361 (DMDDGDDSDDD) shows a compositional bias: acidic residues. The chain crosses the membrane as a helical span at residues 379 to 399 (GGISIIRFIFSSAAWLFSFVF). Polar residues predominate over residues 403–413 (TPSENSLSNQQ). 2 disordered regions span residues 403-535 (TPSE…QEED) and 724-770 (NGSS…SPVP). Residues 414–424 (IDDDEDYEDGD) are compositionally biased toward acidic residues. Residues 432 to 451 (TDSMTSTTKGRANTMPSTTR) show a composition bias toward polar residues. 2 stretches are compositionally biased toward low complexity: residues 452 to 467 (SQNN…QSNG) and 475 to 490 (SHQN…SNGH). A coiled-coil region spans residues 503-726 (DTNASNETDI…VQEFQIKNGS (224 aa)). The span at 510 to 535 (TDIRSMSRELESLRSEISSRRSQEED) shows a compositional bias: basic and acidic residues. The span at 734–761 (ETLMNGRSSTEANNENDTTASDQSSPHQ) shows a compositional bias: polar residues.

In terms of tissue distribution, strong expression in many neurons, very weak expression is also detected in others tissues.

Its subcellular location is the rough endoplasmic reticulum membrane. It localises to the nucleus membrane. Plays a role in the regulation of neuronal activity. In AWA and AWC neurons, plays a role in regulating olfactory adaptation by controlling the forgetting sensory responses to odorants such as diacetyl and isoamyl alcohol. May play a role in regulating daf-7 expression in ASI neurons in response to bacterial small RNAs. In ASI neurons, promotes dauer formation in response to pheromones such as the ascarosides ascr#2 and ascr#3. The polypeptide is Macoilin (Caenorhabditis elegans).